Reading from the N-terminus, the 183-residue chain is Glutamyl-tRNA(Gln) amidotransferase subunit F, mitochondrial (183 aa).

The N-terminal 23 residues, M1–Y23, are a transit peptide targeting the mitochondrion.

Belongs to the GatF family. As to quaternary structure, subunit of the heterotrimeric GatFAB amidotransferase (AdT) complex, composed of A, B and F subunits.

It is found in the mitochondrion inner membrane. It carries out the reaction L-glutamyl-tRNA(Gln) + L-glutamine + ATP + H2O = L-glutaminyl-tRNA(Gln) + L-glutamate + ADP + phosphate + H(+). Its function is as follows. Allows the formation of correctly charged Gln-tRNA(Gln) through the transamidation of misacylated Glu-tRNA(Gln) in the mitochondria. The reaction takes place in the presence of glutamine and ATP through an activated gamma-phospho-Glu-tRNA(Gln). Required for proper protein synthesis within the mitochondrion. This is Glutamyl-tRNA(Gln) amidotransferase subunit F, mitochondrial from Debaryomyces hansenii (strain ATCC 36239 / CBS 767 / BCRC 21394 / JCM 1990 / NBRC 0083 / IGC 2968) (Yeast).